Here is an 83-residue protein sequence, read N- to C-terminus: uncharacterized protein (83 aa).

This is an uncharacterized protein from Methanocaldococcus jannaschii (strain ATCC 43067 / DSM 2661 / JAL-1 / JCM 10045 / NBRC 100440) (Methanococcus jannaschii).